The following is a 321-amino-acid chain: Glucokinase (321 aa).

8–13 lines the ATP pocket; sequence GDVGGT.

The protein belongs to the bacterial glucokinase family.

Its subcellular location is the cytoplasm. The catalysed reaction is D-glucose + ATP = D-glucose 6-phosphate + ADP + H(+). In Salmonella schwarzengrund (strain CVM19633), this protein is Glucokinase.